The following is a 1539-amino-acid chain: Lysine-specific demethylase 5D (1539 aa).

Residues 14–55 (CPVFEPSWAEFQDPLGYIAKIRPIAEKSGICKIRPPADWQPP) enclose the JmjN domain. The ARID domain occupies 79-169 (TRVKLNYLDQ…IIYPYEMFQS (91 aa)). The segment at 192-228 (PHSIPLRQSVQPSKFSSYSRRAKRLQPDPEPTEEDIE) is disordered. Over residues 197–210 (LRQSVQPSKFSSYS) the composition is skewed to polar residues. Residues lysine 205, lysine 229, lysine 244, and lysine 272 each participate in a glycyl lysine isopeptide (Lys-Gly) (interchain with G-Cter in SUMO2) cross-link. Phosphoserine is present on residues serine 291 and serine 307. The segment at 316–362 (ICQVCSRGDEDDKLLFCDGCDDNYHIFCLLPPLPEIPRGIWRCPKCI) adopts a PHD-type 1 zinc-finger fold. Residue tyrosine 430 coordinates 2-oxoglutarate. The JmjC domain occupies 458-624 (EYATSGWNLN…AGRQCIEHYR (167 aa)). 2 residues coordinate Fe cation: histidine 504 and glutamate 506. Residues serine 512, asparagine 514, and lysine 522 each contribute to the 2-oxoglutarate site. Fe cation is bound at residue histidine 592. Residues 697-749 (CIKCKTTCFLSALACYDCPDGLVCLSHINDLCKCSSSRQYLRYRYTLDELPTM) form a C5HC2 zinc finger. The residue at position 884 (serine 884) is a Phosphoserine. Residues 1174–1235 (ICVCGQVPAG…DTKFLCPLCM (62 aa)) form a PHD-type 2 zinc finger. Phosphoserine is present on serine 1346. The segment at 1429-1521 (HQGSRTRSRA…QHKDSGSSAA (93 aa)) is disordered. Residues 1432–1446 (SRTRSRALERRRRRQ) are compositionally biased toward basic residues. Basic and acidic residues predominate over residues 1477-1491 (GREEEHYQEKADREN). A compositionally biased stretch (polar residues) spans 1494 to 1521 (LTPSTDHSPFLKGNQNSLQHKDSGSSAA).

This sequence belongs to the JARID1 histone demethylase family. As to quaternary structure, interacts with PCGF6, MSH5, ZMYND8, AR. It depends on L-ascorbate as a cofactor. Requires Fe(2+) as cofactor. As to expression, expression is highly down-regulated in metastatic prostate tumors.

The protein resides in the nucleus. It catalyses the reaction N(6),N(6),N(6)-trimethyl-L-lysyl(4)-[histone H3] + 3 2-oxoglutarate + 3 O2 = L-lysyl(4)-[histone H3] + 3 formaldehyde + 3 succinate + 3 CO2. Histone demethylase that specifically demethylates 'Lys-4' of histone H3, thereby playing a central role in histone code. Does not demethylate histone H3 'Lys-9', H3 'Lys-27', H3 'Lys-36', H3 'Lys-79' or H4 'Lys-20'. Demethylates trimethylated and dimethylated but not monomethylated H3 'Lys-4'. May play a role in spermatogenesis. Involved in transcriptional repression of diverse metastasis-associated genes; in this function seems to cooperate with ZMYND8. Suppresses prostate cancer cell invasion. Regulates androgen receptor (AR) transcriptional activity by demethylating H3K4me3 active transcription marks. The chain is Lysine-specific demethylase 5D (KDM5D) from Homo sapiens (Human).